Consider the following 340-residue polypeptide: UDP-3-O-acylglucosamine N-acyltransferase (340 aa).

His-240 (proton acceptor) is an active-site residue.

This sequence belongs to the transferase hexapeptide repeat family. LpxD subfamily. Homotrimer.

The catalysed reaction is a UDP-3-O-[(3R)-3-hydroxyacyl]-alpha-D-glucosamine + a (3R)-hydroxyacyl-[ACP] = a UDP-2-N,3-O-bis[(3R)-3-hydroxyacyl]-alpha-D-glucosamine + holo-[ACP] + H(+). Its pathway is bacterial outer membrane biogenesis; LPS lipid A biosynthesis. Functionally, catalyzes the N-acylation of UDP-3-O-acylglucosamine using 3-hydroxyacyl-ACP as the acyl donor. Is involved in the biosynthesis of lipid A, a phosphorylated glycolipid that anchors the lipopolysaccharide to the outer membrane of the cell. This is UDP-3-O-acylglucosamine N-acyltransferase from Pseudoalteromonas translucida (strain TAC 125).